Here is a 519-residue protein sequence, read N- to C-terminus: MISAAVEPHVDAFKPDNREPLTPDFATTGKAPGAQRQHNPNKRKILFVTSEIADLVKTGGLGDVSAALPRALAHLHDVRVLIPGYRQVMESDNPIHIVGELGGHAALPPCKIGRMDMADGLVIYVLICPELYQRDGTPYGANNGRDWPDNHIRFARLGLAAAEIAAGEGKIHWTPEVVHAHDWPAGLAPAYMHWRGLNTPTLFTIHNLAYQGVYSRGCSPELAIPEHAMQQEGMEFYGKLSFLKAGLAYSSHITTVSATYAREITTPEFGCGLDGFLASKAQQGLLGGIPNGIDESWDSATDKHLQHNFSINDWEGKARNTQEVRELFGLDDSEGPLFAVVSRLVYQKGLDLTLGVADYIVEQGGQIAIIGRGEPEEEQAMRELALRHPGRIGVRIGFNETDARRMFAGSDFLLMPSRYEPCGLSQMYAQRFGSLPVARNTGGLADTIECGVTGFLFNESTVESYREALSRAFYVYGKKDLLNAMRCLSMTQPFNWCQAVEPYARLYEDLVKQTQLSHY.

Residues 1 to 40 are disordered; that stretch reads MISAAVEPHVDAFKPDNREPLTPDFATTGKAPGAQRQHNP. Residues 8 to 21 show a composition bias toward basic and acidic residues; it reads PHVDAFKPDNREPL. Lys-57 contributes to the ADP-alpha-D-glucose binding site.

Belongs to the glycosyltransferase 1 family. Bacterial/plant glycogen synthase subfamily.

It carries out the reaction [(1-&gt;4)-alpha-D-glucosyl](n) + ADP-alpha-D-glucose = [(1-&gt;4)-alpha-D-glucosyl](n+1) + ADP + H(+). Its pathway is glycan biosynthesis; glycogen biosynthesis. Its function is as follows. Synthesizes alpha-1,4-glucan chains using ADP-glucose. The polypeptide is Glycogen synthase (Pseudomonas putida (strain ATCC 47054 / DSM 6125 / CFBP 8728 / NCIMB 11950 / KT2440)).